The sequence spans 145 residues: Maximins 3/H9 type 1 (145 aa).

A signal peptide spans 1–18 (MNFKYIVAVSFLIASAYA). 2 propeptides span residues 19–43 (RSVQNDEQSLSQRDVLEEEESLREI) and 74–124 (RTAE…KEKR). Ile144 carries the post-translational modification Isoleucine amide.

This sequence belongs to the bombinin family. In terms of tissue distribution, expressed by the skin glands.

The protein resides in the secreted. Its function is as follows. Maximin-3 shows antibacterial activity against both Gram-positive and Gram-negative bacteria. It also shows antimicrobial activity against the fungus C.albicans, but not against A.flavus nor P.uticale. It has little hemolytic activity. It possess a significant cytotoxicity against tumor cell lines. It possess a significant anti-HIV activity. It shows high spermicidal activity. Maximin-H9 shows antimicrobial activity against bacteria and against the fungus C.albicans. Shows strong hemolytic activity. This chain is Maximins 3/H9 type 1, found in Bombina maxima (Giant fire-bellied toad).